We begin with the raw amino-acid sequence, 250 residues long: MAQVNMRDLLKAGAHFGHQTRYWNPKMSKFIFGARNKIHIINLEQTVPAMNEALNFIQSLAENKNKILFVGTKRAASKIIKEEAQRSGQPYVNHRWLGGMLTNYKTIRQSIRRYRDLEAQSQDGTFDKLTKKEALERTREMDKLERSIGGIKDMGGLPDALFVIDVDHERIAIKEANKLGIPVIGVVDTNSDPDGVDYVIPGNDDAIRAIQIYVKAVADTCLEASQSAGAGADEFVEVSEDAAGAAPAAE.

It belongs to the universal ribosomal protein uS2 family.

In Marinobacter nauticus (strain ATCC 700491 / DSM 11845 / VT8) (Marinobacter aquaeolei), this protein is Small ribosomal subunit protein uS2.